Reading from the N-terminus, the 772-residue chain is MAEAHQAVAFQFTVTPEGVDFRLSREALKHIYLSGINSWKKRLIRIKNGILRGVYPGSPTSWLVVASATAGSSYYNVDISMGLVNHIQRCLPERYGPYWTPQTRALLSMAVVSTGVWMIGIFFFRQTLKLLLSYHGWMFEMHGQSSRVTKVWAICVRLLSSRRPMLYSFQTSLPKLPVPSVPATIHRYLESVQHLLDDEEYSRKEMLAKEFQEKTAPRLQKYLVLKSWWATNYVSDWWEEYVYLRGRTPLMVNSNYYVMDLVLMRSTDVQAARLGNAVHAMIMYRRKLDREDIKPVMALGIVPMCSYQMERMFNTTRIPGKDTDTLQHLTDSRHVAVYHKGRFFKVWLYEGSRLLKPCELELQFQRILDDPSPPQPGEEKLAALTAGGRVEWAQARQAFFSSGKNKFALDAIERAAFFVALDEESHHYDPEDEASLSLYGKALLHGNCYNRWFDKSFTLIAFKNGQLGLNTEHAWADAPIIGHLWEFVLGTDTFHLGYTETGHCLGKPNPMLAPPQRLQWDIPEQCQAVIESSYQVAKALADDVELYCFQFLPFGKGLIKKCRTSPDAFVQIALQLAYFRDRGKFCLTYEASMTRMFREGRTETVRSCTRESTAFVQAMVEGRRVKADLQDLFRKAAQKHQNMYRLAMTGAGIDRHLFCLYVVSKYLGVSSPFLAEVLSEPWRLSTSQIAQFQIRMFDPNKYPNHLGAGGGFGPVADDGYGVSYMIAGENTIFFHVSSKFSSSETNAQRFGNHIRQALLDLADLFQVPKTDS.

Residues M1–K47 are Cytoplasmic-facing. A helical transmembrane segment spans residues N48–S73. The Mitochondrial intermembrane portion of the chain corresponds to Y74–Q102. Residues T103–F122 form a helical membrane-spanning segment. The Cytoplasmic segment spans residues F123–S772. The active-site Proton acceptor is H473. CoA is bound at residue G555–D567. Residues Y589 and T602 each coordinate (R)-carnitine.

It belongs to the carnitine/choline acetyltransferase family.

It localises to the mitochondrion outer membrane. It catalyses the reaction (R)-carnitine + hexadecanoyl-CoA = O-hexadecanoyl-(R)-carnitine + CoA. Its pathway is lipid metabolism; fatty acid beta-oxidation. Catalyzes the transfer of the acyl group of long-chain fatty acid-CoA conjugates onto carnitine, an essential step for the mitochondrial uptake of long-chain fatty acids and their subsequent beta-oxidation in the mitochondrion. The sequence is that of Carnitine O-palmitoyltransferase 1, muscle isoform (CPT1B) from Sus scrofa (Pig).